Here is a 280-residue protein sequence, read N- to C-terminus: UPF0750 membrane protein YitT (280 aa).

4 helical membrane passes run 9–29 (LLIV…FLIP), 54–74 (FYIS…ILGW), 80–100 (SFTV…GILP), and 151–171 (VGTY…LLQG).

The protein belongs to the UPF0750 family.

It is found in the cell membrane. In Bacillus subtilis (strain 168), this protein is UPF0750 membrane protein YitT (yitT).